A 419-amino-acid chain; its full sequence is Thymidine phosphorylase (419 aa).

This sequence belongs to the thymidine/pyrimidine-nucleoside phosphorylase family. Homodimer.

The enzyme catalyses thymidine + phosphate = 2-deoxy-alpha-D-ribose 1-phosphate + thymine. The enzymes which catalyze the reversible phosphorolysis of pyrimidine nucleosides are involved in the degradation of these compounds and in their utilization as carbon and energy sources, or in the rescue of pyrimidine bases for nucleotide synthesis. This Mycoplasmoides pirum (Mycoplasma pirum) protein is Thymidine phosphorylase (deoA).